Consider the following 380-residue polypeptide: Probable tRNA sulfurtransferase (380 aa).

The region spanning 58–162 (EEVIERLKKV…MAFVYAGVIE (105 aa)) is the THUMP domain. ATP is bound by residues 178–179 (LL), 203–204 (YF), Arg-260, Gly-282, and Gln-291.

Belongs to the ThiI family.

It is found in the cytoplasm. It carries out the reaction [ThiI sulfur-carrier protein]-S-sulfanyl-L-cysteine + a uridine in tRNA + 2 reduced [2Fe-2S]-[ferredoxin] + ATP + H(+) = [ThiI sulfur-carrier protein]-L-cysteine + a 4-thiouridine in tRNA + 2 oxidized [2Fe-2S]-[ferredoxin] + AMP + diphosphate. The enzyme catalyses [ThiS sulfur-carrier protein]-C-terminal Gly-Gly-AMP + S-sulfanyl-L-cysteinyl-[cysteine desulfurase] + AH2 = [ThiS sulfur-carrier protein]-C-terminal-Gly-aminoethanethioate + L-cysteinyl-[cysteine desulfurase] + A + AMP + 2 H(+). It participates in cofactor biosynthesis; thiamine diphosphate biosynthesis. Functionally, catalyzes the ATP-dependent transfer of a sulfur to tRNA to produce 4-thiouridine in position 8 of tRNAs, which functions as a near-UV photosensor. Also catalyzes the transfer of sulfur to the sulfur carrier protein ThiS, forming ThiS-thiocarboxylate. This is a step in the synthesis of thiazole, in the thiamine biosynthesis pathway. The sulfur is donated as persulfide by IscS. In Thermoanaerobacter pseudethanolicus (strain ATCC 33223 / 39E) (Clostridium thermohydrosulfuricum), this protein is Probable tRNA sulfurtransferase.